Here is a 1072-residue protein sequence, read N- to C-terminus: Carbamoyl phosphate synthase large chain (1072 aa).

Positions methionine 1 to glutamate 401 are carboxyphosphate synthetic domain. ATP is bound by residues arginine 129, arginine 169, glycine 175, glycine 176, lysine 208, leucine 210, glutamate 215, glycine 241, valine 242, histidine 243, glutamine 284, and glutamate 298. Positions lysine 133–isoleucine 327 constitute an ATP-grasp 1 domain. 3 residues coordinate Mg(2+): glutamine 284, glutamate 298, and asparagine 300. Mn(2+)-binding residues include glutamine 284, glutamate 298, and asparagine 300. Residues isoleucine 402 to aspartate 544 form an oligomerization domain region. Residues glutamate 545–glycine 929 form a carbamoyl phosphate synthetic domain region. The ATP-grasp 2 domain occupies serine 671–leucine 861. Residues arginine 707, lysine 746, isoleucine 748, glutamate 752, glycine 777, valine 778, histidine 779, serine 780, glutamine 820, and glutamate 832 each contribute to the ATP site. Glutamine 820, glutamate 832, and asparagine 834 together coordinate Mg(2+). Mn(2+) contacts are provided by glutamine 820, glutamate 832, and asparagine 834. Positions leucine 930–leucine 1072 constitute an MGS-like domain. Positions leucine 930–leucine 1072 are allosteric domain.

It belongs to the CarB family. In terms of assembly, composed of two chains; the small (or glutamine) chain promotes the hydrolysis of glutamine to ammonia, which is used by the large (or ammonia) chain to synthesize carbamoyl phosphate. Tetramer of heterodimers (alpha,beta)4. Mg(2+) is required as a cofactor. Requires Mn(2+) as cofactor.

The enzyme catalyses hydrogencarbonate + L-glutamine + 2 ATP + H2O = carbamoyl phosphate + L-glutamate + 2 ADP + phosphate + 2 H(+). It carries out the reaction hydrogencarbonate + NH4(+) + 2 ATP = carbamoyl phosphate + 2 ADP + phosphate + 2 H(+). The protein operates within amino-acid biosynthesis; L-arginine biosynthesis; carbamoyl phosphate from bicarbonate: step 1/1. Its pathway is pyrimidine metabolism; UMP biosynthesis via de novo pathway; (S)-dihydroorotate from bicarbonate: step 1/3. Large subunit of the glutamine-dependent carbamoyl phosphate synthetase (CPSase). CPSase catalyzes the formation of carbamoyl phosphate from the ammonia moiety of glutamine, carbonate, and phosphate donated by ATP, constituting the first step of 2 biosynthetic pathways, one leading to arginine and/or urea and the other to pyrimidine nucleotides. The large subunit (synthetase) binds the substrates ammonia (free or transferred from glutamine from the small subunit), hydrogencarbonate and ATP and carries out an ATP-coupled ligase reaction, activating hydrogencarbonate by forming carboxy phosphate which reacts with ammonia to form carbamoyl phosphate. The polypeptide is Carbamoyl phosphate synthase large chain (Thermoanaerobacter pseudethanolicus (strain ATCC 33223 / 39E) (Clostridium thermohydrosulfuricum)).